A 453-amino-acid chain; its full sequence is Ribosomal protein uS12 methylthiotransferase RimO (453 aa).

Residues 5–120 (PKVGFVSLGC…VMQAVHSHLP (116 aa)) enclose the MTTase N-terminal domain. [4Fe-4S] cluster-binding residues include C14, C50, C79, C151, C155, and C158. Residues 137–382 (LTPRHYAYLK…MEVAEEVSAN (246 aa)) enclose the Radical SAM core domain. The TRAM domain occupies 385–453 (QRKIGKTLKV…ADGHDLWGEV (69 aa)).

Belongs to the methylthiotransferase family. RimO subfamily. [4Fe-4S] cluster is required as a cofactor.

The protein resides in the cytoplasm. The enzyme catalyses L-aspartate(89)-[ribosomal protein uS12]-hydrogen + (sulfur carrier)-SH + AH2 + 2 S-adenosyl-L-methionine = 3-methylsulfanyl-L-aspartate(89)-[ribosomal protein uS12]-hydrogen + (sulfur carrier)-H + 5'-deoxyadenosine + L-methionine + A + S-adenosyl-L-homocysteine + 2 H(+). Catalyzes the methylthiolation of an aspartic acid residue of ribosomal protein uS12. In Burkholderia orbicola (strain MC0-3), this protein is Ribosomal protein uS12 methylthiotransferase RimO.